Consider the following 159-residue polypeptide: Ribosomal RNA large subunit methyltransferase H (159 aa).

Residues leucine 76, glycine 108, and 127–132 (FSKMTF) contribute to the S-adenosyl-L-methionine site.

This sequence belongs to the RNA methyltransferase RlmH family. As to quaternary structure, homodimer.

It is found in the cytoplasm. The catalysed reaction is pseudouridine(1915) in 23S rRNA + S-adenosyl-L-methionine = N(3)-methylpseudouridine(1915) in 23S rRNA + S-adenosyl-L-homocysteine + H(+). Functionally, specifically methylates the pseudouridine at position 1915 (m3Psi1915) in 23S rRNA. The polypeptide is Ribosomal RNA large subunit methyltransferase H (Clostridium novyi (strain NT)).